Reading from the N-terminus, the 99-residue chain is Small integral membrane protein 14 (99 aa).

Residues M1–N49 lie on the Lumenal side of the membrane. A helical transmembrane segment spans residues G50–L70. The Cytoplasmic portion of the chain corresponds to R71 to D99. The segment at S78–D99 is disordered.

The protein resides in the endoplasmic reticulum membrane. The sequence is that of Small integral membrane protein 14 (SMIM14) from Homo sapiens (Human).